Reading from the N-terminus, the 149-residue chain is Large ribosomal subunit protein bL9 (149 aa).

It belongs to the bacterial ribosomal protein bL9 family.

Functionally, binds to the 23S rRNA. The protein is Large ribosomal subunit protein bL9 of Edwardsiella ictaluri (strain 93-146).